A 481-amino-acid polypeptide reads, in one-letter code: Velvet complex subunit B (481 aa).

Disordered regions lie at residues 1 to 157 (MNSA…YSKI) and 241 to 339 (GTGA…NGYG). Composition is skewed to pro residues over residues 36-45 (HPPPPLPPPS), 53-62 (PPLPPPPSAP), and 96-112 (PYAPAPYQQPQPSQYPR). Positions 160–464 (GSGWKYSLDV…ANQGIKIPIR (305 aa)) constitute a Velvet domain. Composition is skewed to low complexity over residues 241–255 (GTGAMASSSTYTYSS) and 293–325 (QQSYGQAPSYPPSSSYGPPQQYYPRHSGYSAEP).

This sequence belongs to the velvet family. VelB subfamily. Component of the heterotrimeric velvet complex composed of laeA, veA and velB; VeA acting as a bridging protein between laeA and velB. Forms a heterodimeric complex with vosA; the formation of the velB-vosA complex is light-dependent.

The protein resides in the nucleus. It localises to the cytoplasm. Its function is as follows. Component of the velvet transcription factor complex that controls sexual/asexual developmental ratio in response to light, promoting sexual development in the darkness while stimulating asexual sporulation under illumination. The velvet complex acts as a global regulator for secondary metabolite gene expression. Component of the velB-VosA heterodimeric complex that plays a dual role in activating genes associated with spore maturation and repressing certain development-associated genes. The velB-VosA complex binds DNA through the DNA-binding domain of vosA that recognizes an 11-nucleotide consensus sequence 5'-CTGGCCGCGGC-3' consisting of two motifs in the promoters of key developmental regulatory genes. Controls the biosynthetic gene cluster for beauvericin, a depsipeptide mycotoxin that functions as a virulence determinant. Also regulates chromatin structure and transcription of siderophore biosynthetic genes and is required for infection of tomato plants. The protein is Velvet complex subunit B of Fusarium oxysporum f. sp. lycopersici (strain 4287 / CBS 123668 / FGSC 9935 / NRRL 34936) (Fusarium vascular wilt of tomato).